A 122-amino-acid chain; its full sequence is Large ribosomal subunit protein eL18 (122 aa).

Belongs to the eukaryotic ribosomal protein eL18 family.

This is Large ribosomal subunit protein eL18 from Pyrobaculum aerophilum (strain ATCC 51768 / DSM 7523 / JCM 9630 / CIP 104966 / NBRC 100827 / IM2).